The primary structure comprises 67 residues: MNAQELRSKTPDQLRDQLVALKKEAFNLRFQQATGQLENTARMRAVRRDVARIKTVLNEMAASAAAN.

The protein belongs to the universal ribosomal protein uL29 family.

The chain is Large ribosomal subunit protein uL29 from Cereibacter sphaeroides (strain ATCC 17025 / ATH 2.4.3) (Rhodobacter sphaeroides).